The primary structure comprises 108 residues: Nucleoid-associated protein Lcho_1975 (108 aa).

The protein belongs to the YbaB/EbfC family. Homodimer.

The protein resides in the cytoplasm. The protein localises to the nucleoid. Functionally, binds to DNA and alters its conformation. May be involved in regulation of gene expression, nucleoid organization and DNA protection. In Leptothrix cholodnii (strain ATCC 51168 / LMG 8142 / SP-6) (Leptothrix discophora (strain SP-6)), this protein is Nucleoid-associated protein Lcho_1975.